We begin with the raw amino-acid sequence, 348 residues long: Holliday junction branch migration complex subunit RuvB (348 aa).

A large ATPase domain (RuvB-L) region spans residues 1–183 (MAPQPRRLIA…FGIPIRLEYY (183 aa)). ATP-binding positions include leucine 22, arginine 23, glycine 64, lysine 67, threonine 68, threonine 69, 130 to 132 (EDF), arginine 173, tyrosine 183, and arginine 220. Threonine 68 is a binding site for Mg(2+). The tract at residues 184 to 254 (TVEELECIVR…VADRALRLLD (71 aa)) is small ATPAse domain (RuvB-S). Positions 257-348 (HIGLDQMDRR…FQLFSEGGEE (92 aa)) are head domain (RuvB-H). DNA is bound by residues arginine 293, arginine 312, and arginine 317.

Belongs to the RuvB family. In terms of assembly, homohexamer. Forms an RuvA(8)-RuvB(12)-Holliday junction (HJ) complex. HJ DNA is sandwiched between 2 RuvA tetramers; dsDNA enters through RuvA and exits via RuvB. An RuvB hexamer assembles on each DNA strand where it exits the tetramer. Each RuvB hexamer is contacted by two RuvA subunits (via domain III) on 2 adjacent RuvB subunits; this complex drives branch migration. In the full resolvosome a probable DNA-RuvA(4)-RuvB(12)-RuvC(2) complex forms which resolves the HJ.

The protein localises to the cytoplasm. It catalyses the reaction ATP + H2O = ADP + phosphate + H(+). The RuvA-RuvB-RuvC complex processes Holliday junction (HJ) DNA during genetic recombination and DNA repair, while the RuvA-RuvB complex plays an important role in the rescue of blocked DNA replication forks via replication fork reversal (RFR). RuvA specifically binds to HJ cruciform DNA, conferring on it an open structure. The RuvB hexamer acts as an ATP-dependent pump, pulling dsDNA into and through the RuvAB complex. RuvB forms 2 homohexamers on either side of HJ DNA bound by 1 or 2 RuvA tetramers; 4 subunits per hexamer contact DNA at a time. Coordinated motions by a converter formed by DNA-disengaged RuvB subunits stimulates ATP hydrolysis and nucleotide exchange. Immobilization of the converter enables RuvB to convert the ATP-contained energy into a lever motion, pulling 2 nucleotides of DNA out of the RuvA tetramer per ATP hydrolyzed, thus driving DNA branch migration. The RuvB motors rotate together with the DNA substrate, which together with the progressing nucleotide cycle form the mechanistic basis for DNA recombination by continuous HJ branch migration. Branch migration allows RuvC to scan DNA until it finds its consensus sequence, where it cleaves and resolves cruciform DNA. The polypeptide is Holliday junction branch migration complex subunit RuvB (Methylocella silvestris (strain DSM 15510 / CIP 108128 / LMG 27833 / NCIMB 13906 / BL2)).